Reading from the N-terminus, the 697-residue chain is Potassium-transporting ATPase ATP-binding subunit (697 aa).

A run of 4 helical transmembrane segments spans residues 55–75 (PIMF…FLPS), 82–102 (GWFN…ANFA), 245–265 (LTFI…YLGF), and 271–291 (VLVA…LSAI). D324 (4-aspartylphosphate intermediate) is an active-site residue. Residues D361, E365, 393-400 (FKAETRMS), and K412 contribute to the ATP site. Residues D535 and D539 each contribute to the Mg(2+) site. A run of 3 helical transmembrane segments spans residues 605–625 (FAII…LNIM), 633–653 (AILS…PLAM), and 677–697 (GGVI…GLFI).

The protein belongs to the cation transport ATPase (P-type) (TC 3.A.3) family. Type IA subfamily. The system is composed of three essential subunits: KdpA, KdpB and KdpC.

Its subcellular location is the cell membrane. It carries out the reaction K(+)(out) + ATP + H2O = K(+)(in) + ADP + phosphate + H(+). Functionally, part of the high-affinity ATP-driven potassium transport (or Kdp) system, which catalyzes the hydrolysis of ATP coupled with the electrogenic transport of potassium into the cytoplasm. This subunit is responsible for energy coupling to the transport system and for the release of the potassium ions to the cytoplasm. The protein is Potassium-transporting ATPase ATP-binding subunit of Bacillus cereus (strain AH187).